The following is a 215-amino-acid chain: Small ribosomal subunit protein uS7 (215 aa).

Belongs to the universal ribosomal protein uS7 family. In terms of assembly, part of the 30S ribosomal subunit.

In terms of biological role, one of the primary rRNA binding proteins, it binds directly to 16S rRNA where it nucleates assembly of the head domain of the 30S subunit. Is located at the subunit interface close to the decoding center. The sequence is that of Small ribosomal subunit protein uS7 from Thermococcus celer.